Reading from the N-terminus, the 390-residue chain is 23S rRNA (uracil(747)-C(5))-methyltransferase RlmC (390 aa).

Cysteine 12, cysteine 20, cysteine 23, and cysteine 100 together coordinate [4Fe-4S] cluster. S-adenosyl-L-methionine-binding residues include glutamine 225, phenylalanine 254, glutamate 275, and asparagine 322. Cysteine 349 (nucleophile) is an active-site residue.

Belongs to the class I-like SAM-binding methyltransferase superfamily. RNA M5U methyltransferase family. RlmC subfamily.

It carries out the reaction uridine(747) in 23S rRNA + S-adenosyl-L-methionine = 5-methyluridine(747) in 23S rRNA + S-adenosyl-L-homocysteine + H(+). In terms of biological role, catalyzes the formation of 5-methyl-uridine at position 747 (m5U747) in 23S rRNA. This is 23S rRNA (uracil(747)-C(5))-methyltransferase RlmC from Shewanella baltica (strain OS223).